The chain runs to 423 residues: Histidine--tRNA ligase (423 aa).

Belongs to the class-II aminoacyl-tRNA synthetase family.

The protein localises to the cytoplasm. It carries out the reaction tRNA(His) + L-histidine + ATP = L-histidyl-tRNA(His) + AMP + diphosphate + H(+). The protein is Histidine--tRNA ligase of Picrophilus torridus (strain ATCC 700027 / DSM 9790 / JCM 10055 / NBRC 100828 / KAW 2/3).